A 326-amino-acid polypeptide reads, in one-letter code: Aquaporin-4 (326 aa).

Residues 1–39 (MSDGAGAAARRWGKCGGRSCSRESIMVAFKGVWTQAFWK) lie on the Cytoplasmic side of the membrane. 2 S-palmitoyl cysteine lipidation sites follow: C15 and C20. Residues 40-60 (AVTAEFLAMLIFVLLSVGSTI) traverse the membrane as a helical segment. At 61-72 (NWGGSENPLPVD) the chain is on the extracellular side. The chain crosses the membrane as a helical span at residues 73 to 92 (MVLISLCFGLSIATMVQCFG). Over 93–96 (HISG) the chain is Cytoplasmic. Positions 97–104 (GHINPAVT) form an intramembrane region, discontinuously helical. Residues 100–102 (NPA) carry the NPA 1 motif. The Cytoplasmic portion of the chain corresponds to 105 to 118 (VAMVCTRKISIAKS). S114 carries the post-translational modification Phosphoserine; by PKG. A helical membrane pass occupies residues 119–139 (VFYITAQCLGAIIGAGILYLV). Residues 140–158 (TPPNVVGGLGVTTVHGNLT) lie on the Extracellular side of the membrane. An N-linked (GlcNAc...) asparagine glycan is attached at N156. A helical transmembrane segment spans residues 159–179 (AGHGLLVELIITFQLVFTIFA). At 180–187 (SCDSKRTD) the chain is on the cytoplasmic side. Phosphoserine; by PKC is present on S183. Residues 188–208 (VTGSIALAIGFSVAIGHLFAI) form a helical membrane-spanning segment. N-linked (GlcNAc...) asparagine glycosylation occurs at N209. Residues 209–211 (NYT) are Extracellular-facing. Residues 212–225 (GASMNPARSFGPAV) constitute an intramembrane region (discontinuously helical). The NPA 2 motif lies at 216–218 (NPA). Over 226–234 (IMGNWENHW) the chain is Extracellular. A helical membrane pass occupies residues 235 to 255 (IYWVGPIIGAVLAGALYEYVF). Topologically, residues 256–326 (CPDVELKRRL…DSAGEVLSSV (71 aa)) are cytoplasmic. A phosphoserine mark is found at S279 and S288. Phosphothreonine is present on T292. S324 is subject to Phosphoserine.

Belongs to the MIP/aquaporin (TC 1.A.8) family. As to quaternary structure, homotetramer. The tetramers can form oligomeric arrays in membranes. The size of the oligomers differs between tissues and is smaller in skeletal muscle than in brain. Interaction between AQP4 oligomeric arrays in close-by cells can contribute to cell-cell adhesion. Part of a complex containing MLC1, TRPV4, HEPACAM and ATP1B1. Post-translationally, phosphorylation by PKC at Ser-183 reduces conductance by 50%. Phosphorylation by PKG at Ser-114 in response to glutamate increases conductance by 40%. In terms of processing, isoform Long: Palmitoylated on its N-terminal region.

The protein localises to the cell membrane. It localises to the basolateral cell membrane. It is found in the endosome membrane. Its subcellular location is the sarcolemma. The protein resides in the cell projection. The enzyme catalyses H2O(in) = H2O(out). Its function is as follows. Forms a water-specific channel. Plays an important role in brain water homeostasis and in glymphatic solute transport. Required for a normal rate of water exchange across the blood brain interface. Required for normal levels of cerebrospinal fluid influx into the brain cortex and parenchyma along paravascular spaces that surround penetrating arteries, and for normal drainage of interstitial fluid along paravenous drainage pathways. Thereby, it is required for normal clearance of solutes from the brain interstitial fluid, including soluble beta-amyloid peptides derived from APP. Plays a redundant role in urinary water homeostasis and urinary concentrating ability. This chain is Aquaporin-4 (AQP4), found in Notomys alexis (Spinifex hopping mouse).